A 373-amino-acid chain; its full sequence is Glutamate 5-kinase (373 aa).

Lys12 lines the ATP pocket. Positions 52, 139, and 154 each coordinate substrate. Residue 216–222 (TGGMVTK) participates in ATP binding. Residues 281–359 (RGNICIDDGA…DEINTVLAGN (79 aa)) form the PUA domain.

This sequence belongs to the glutamate 5-kinase family.

The protein localises to the cytoplasm. It catalyses the reaction L-glutamate + ATP = L-glutamyl 5-phosphate + ADP. Its pathway is amino-acid biosynthesis; L-proline biosynthesis; L-glutamate 5-semialdehyde from L-glutamate: step 1/2. Catalyzes the transfer of a phosphate group to glutamate to form L-glutamate 5-phosphate. The chain is Glutamate 5-kinase from Dehalococcoides mccartyi (strain ATCC BAA-2266 / KCTC 15142 / 195) (Dehalococcoides ethenogenes (strain 195)).